Reading from the N-terminus, the 219-residue chain is Probable glutathione S-transferase MSR-1 (219 aa).

The 80-residue stretch at 4–83 (NNVVLLDFSG…YIDEVWHEKC (80 aa)) folds into the GST N-terminal domain. Glutathione-binding positions include S14, K41, I55, and 67–68 (ES). Residues 89-208 (DPYQRSQARF…LPHPHKIYDF (120 aa)) enclose the GST C-terminal domain.

This sequence belongs to the GST superfamily. HSP26 family.

The enzyme catalyses RX + glutathione = an S-substituted glutathione + a halide anion + H(+). Functionally, may play an important role in hormonal and growth regulatory responses. This is Probable glutathione S-transferase MSR-1 (MSR-1) from Nicotiana plumbaginifolia (Leadwort-leaved tobacco).